Here is a 555-residue protein sequence, read N- to C-terminus: Inositol 1,4,5-triphosphate receptor associated 2 (555 aa).

Topologically, residues 1–495 (MESTPFSGVA…LKSSIRKANK (495 aa)) are cytoplasmic. Disordered stretches follow at residues 84 to 103 (SLPL…SSDP) and 128 to 147 (RSAS…DNIA). At T91 the chain carries Phosphothreonine. The segment covering 91-102 (TSSTDGTITSSD) has biased composition (low complexity). Polar residues predominate over residues 129–142 (SASPTIEAQGTSPA). A coiled-coil region spans residues 227–341 (TLEKRVKLEE…LEELKQVLLQ (115 aa)). Residues S363, S370, and S424 each carry the phosphoserine modification. Positions 437-469 (ELKTKDDSEPSGEETVERTRKPSLSEKKNNPSK) are disordered. Residues 451 to 465 (TVERTRKPSLSEKKN) are compositionally biased toward basic and acidic residues. The helical; Anchor for type IV membrane protein transmembrane segment at 496 to 516 (ALWLSIAFIVLFAALMSFLTG) threads the bilayer. At 517 to 555 (QLFQKSVDAAPTQQEDSWTSLEHILWPFTRLRHNGPPPV) the chain is on the lumenal side.

Belongs to the IRAG2 family. Interacts (via coiled-coil domain) with ITPR3. Interacts with SUN1 and SUN2. Interacts with microtubules. Interacts with HCN4; regulates HCN4 channel activity. The removal of the C-terminal lumenal domain occurs by proteolytic processing. As to expression, expressed at high levels in pre B-cells, mature B-cells and pre T-cells. Expressed at low levels in mature T-cells and plasma B-cells. Expressed in germinal center B-cells, splenic marginal zone cells and B-cell lymphomas. Expressed in neuronal cells in the cerebral cortex, epithelial cells in tonsil, adrenal glands, zymogen-producing cells in the stomach and epithelial cells in seminal vesicles.

Its subcellular location is the cytoplasm. The protein localises to the endoplasmic reticulum membrane. It is found in the nucleus envelope. The protein resides in the cytoskeleton. It localises to the microtubule organizing center. Its subcellular location is the centrosome. The protein localises to the spindle pole. It is found in the chromosome. Its function is as follows. Plays a role in the delivery of peptides to major histocompatibility complex (MHC) class I molecules; this occurs in a transporter associated with antigen processing (TAP)-independent manner. May play a role in taste signal transduction via ITPR3. May play a role during fertilization in pronucleus congression and fusion. Plays a role in maintaining nuclear shape, maybe as a component of the LINC complex and through interaction with microtubules. Plays a role in the regulation of cellular excitability by regulating the hyperpolarization-activated cyclic nucleotide-gated HCN4 channel activity. The sequence is that of Inositol 1,4,5-triphosphate receptor associated 2 from Homo sapiens (Human).